Here is a 411-residue protein sequence, read N- to C-terminus: Phosphopentomutase (411 aa).

The Mn(2+) site is built by aspartate 14, aspartate 306, histidine 311, aspartate 347, histidine 348, and histidine 359.

This sequence belongs to the phosphopentomutase family. Mn(2+) is required as a cofactor.

It is found in the cytoplasm. It carries out the reaction 2-deoxy-alpha-D-ribose 1-phosphate = 2-deoxy-D-ribose 5-phosphate. It catalyses the reaction alpha-D-ribose 1-phosphate = D-ribose 5-phosphate. The protein operates within carbohydrate degradation; 2-deoxy-D-ribose 1-phosphate degradation; D-glyceraldehyde 3-phosphate and acetaldehyde from 2-deoxy-alpha-D-ribose 1-phosphate: step 1/2. Functionally, isomerase that catalyzes the conversion of deoxy-ribose 1-phosphate (dRib-1-P) and ribose 1-phosphate (Rib-1-P) to deoxy-ribose 5-phosphate (dRib-5-P) and ribose 5-phosphate (Rib-5-P), respectively. This is Phosphopentomutase from Lactococcus lactis subsp. cremoris (strain MG1363).